The sequence spans 139 residues: Bilirubin-inducible fluorescent protein UnaG (139 aa).

Residues N57, T61, S80, R112, and 132-134 (RSY) contribute to the (4Z,15Z)-bilirubin IXalpha site.

It belongs to the calycin superfamily. Fatty-acid binding protein (FABP) family. In terms of assembly, monomer. In terms of tissue distribution, detected in small-diameter muscle fibers from the white muscle layer from juvenile animals (glass eels) (at protein level). Detected in small-diameter muscle fibers from juvenile animals (glass eels).

It localises to the cytoplasm. Functionally, beta-barrel protein that binds unconjugated bilirubin with high affinity. Excitation of the bilirubin-bound protein gives rise to green fluorescence, both under normoxia and hypoxia. The apoprotein is not fluorescent. Does not emit fluorescence in the presence of ditauro-bilirubin, urobilin or biliverdin. In Anguilla japonica (Japanese eel), this protein is Bilirubin-inducible fluorescent protein UnaG.